A 376-amino-acid polypeptide reads, in one-letter code: PqqA peptide cyclase (376 aa).

Residues 4 to 219 (VPPPLSVLLE…VETARRSLGD (216 aa)) enclose the Radical SAM core domain. 3 residues coordinate [4Fe-4S] cluster: C18, C22, and C25.

Belongs to the radical SAM superfamily. PqqE family. Interacts with PqqD. The interaction is necessary for activity of PqqE. The cofactor is [4Fe-4S] cluster.

The catalysed reaction is [PQQ precursor protein] + S-adenosyl-L-methionine = E-Y cross-linked-[PQQ precursor protein] + 5'-deoxyadenosine + L-methionine + H(+). The protein operates within cofactor biosynthesis; pyrroloquinoline quinone biosynthesis. Catalyzes the cross-linking of a glutamate residue and a tyrosine residue in the PqqA protein as part of the biosynthesis of pyrroloquinoline quinone (PQQ). This Xanthomonas campestris pv. campestris (strain 8004) protein is PqqA peptide cyclase.